Reading from the N-terminus, the 194-residue chain is Molybdenum cofactor guanylyltransferase (194 aa).

Residues 12-14 (LAG), Lys-25, Asn-53, Asp-70, and Asp-100 contribute to the GTP site. Residue Asp-100 coordinates Mg(2+).

This sequence belongs to the MobA family. Monomer. Requires Mg(2+) as cofactor.

The protein resides in the cytoplasm. It carries out the reaction Mo-molybdopterin + GTP + H(+) = Mo-molybdopterin guanine dinucleotide + diphosphate. In terms of biological role, transfers a GMP moiety from GTP to Mo-molybdopterin (Mo-MPT) cofactor (Moco or molybdenum cofactor) to form Mo-molybdopterin guanine dinucleotide (Mo-MGD) cofactor. The chain is Molybdenum cofactor guanylyltransferase from Photobacterium profundum (strain SS9).